A 746-amino-acid polypeptide reads, in one-letter code: Transcription factor pbcR (746 aa).

Residues 1–12 (MYPWSSTGTSPF) are compositionally biased toward polar residues. Positions 1–40 (MYPWSSTGTSPFSHPDNEGAESGDMSMGEEQQQPHQRRQK) are disordered. Residues 47–76 (CQSCRASKVRCDQPNPGMPCLRCQKSGKPC) constitute a DNA-binding region (zn(2)-C6 fungal-type). Residues 109-131 (ELQDSAGDGETAHSTALRSPSQL) form a disordered region. Polar residues predominate over residues 120 to 131 (AHSTALRSPSQL).

The protein resides in the nucleus. Its function is as follows. Transcription factor; part of the gene cluster that mediates the biosynthesis of the diterpene ent-pimara-8(14),15-diene (PD). Acts as a positive regulator for the cluster gene. Down-regulates the expression of the penicillin gene cluster, two putative polyketide clusters, and one putative nonribosomal peptide cluster. The chain is Transcription factor pbcR from Emericella nidulans (strain FGSC A4 / ATCC 38163 / CBS 112.46 / NRRL 194 / M139) (Aspergillus nidulans).